The primary structure comprises 153 residues: Bursicon (153 aa).

Positions 1-22 (MLLYHIVGASVLICLLNETAKA) are cleaved as a signal peptide. 5 cysteine pairs are disulfide-bonded: C29–C78, C43–C92, C53–C113, C57–C115, and C75–C118. Positions 29–119 (CQATPVIHFL…PLECMCRPCT (91 aa)) constitute a CTCK domain.

In terms of assembly, heterodimer of burs and pburs.

Its subcellular location is the secreted. Functionally, final heterodimeric neurohormone released at the end of the molting cycle, involved in the sclerotization (tanning) of the insect cuticle, melanization and wing spreading. The polypeptide is Bursicon (Apis mellifera (Honeybee)).